We begin with the raw amino-acid sequence, 48 residues long: Delta-stichotoxin-Hcr1b (48 aa).

3 disulfides stabilise this stretch: Cys-3–Cys-43, Cys-5–Cys-33, and Cys-26–Cys-44.

This sequence belongs to the sea anemone sodium channel inhibitory toxin family. Type II subfamily.

The protein localises to the secreted. It localises to the nematocyst. Its function is as follows. Binds to site 3 of voltage-gated sodium channels and inhibits the inactivation process. The chain is Delta-stichotoxin-Hcr1b from Radianthus crispa (Leathery sea anemone).